A 366-amino-acid polypeptide reads, in one-letter code: Sperm equatorial segment protein 1 (366 aa).

The signal sequence occupies residues 1–18; sequence MKFLVLLVALLLWPSSLP. A glycan (N-linked (GlcNAc...) asparagine) is linked at asparagine 129. Residues 139–204 form a disordered region; it reads PFIEKDEPEP…EDVPQLSGDN (66 aa). Over residues 144–157 the composition is skewed to acidic residues; the sequence is DEPEPEPEPEPEPE. Over residues 165 to 189 the composition is skewed to polar residues; that stretch reads APTQVPSVTEPSQDVTSLSGSTDLG.

This sequence belongs to the SPESP1 family. In terms of processing, glycosylated. In testis there are two predominant forms of 77- and 67-kDa and a form of 47-kDa, whereas in epididymal sperm from caput, corpus, and cauda there are two forms of 47- and 43-kDa. Testis forms contain complex carbohydrate residues. Epididymal sperm forms are N-glycosylated. Then undergoes significant glycosylation in the testis and that the majority of these glycoconjugates are removed by the time sperm reach the caput epididymis.

It is found in the cytoplasmic vesicle. Its subcellular location is the secretory vesicle. It localises to the acrosome. Functionally, involved in fertilization ability of sperm. The chain is Sperm equatorial segment protein 1 from Bos taurus (Bovine).